A 116-amino-acid chain; its full sequence is Ribonuclease P protein component (116 aa).

This sequence belongs to the RnpA family. As to quaternary structure, consists of a catalytic RNA component (M1 or rnpB) and a protein subunit.

It carries out the reaction Endonucleolytic cleavage of RNA, removing 5'-extranucleotides from tRNA precursor.. In terms of biological role, RNaseP catalyzes the removal of the 5'-leader sequence from pre-tRNA to produce the mature 5'-terminus. It can also cleave other RNA substrates such as 4.5S RNA. The protein component plays an auxiliary but essential role in vivo by binding to the 5'-leader sequence and broadening the substrate specificity of the ribozyme. The chain is Ribonuclease P protein component from Mycobacterium bovis (strain ATCC BAA-935 / AF2122/97).